Reading from the N-terminus, the 400-residue chain is Acetate kinase (400 aa).

Asn7 is a Mg(2+) binding site. Lys14 is an ATP binding site. Arg90 is a binding site for substrate. Asp147 serves as the catalytic Proton donor/acceptor. ATP-binding positions include 207-211, 282-284, and 331-335; these read HLGNG, DFR, and GIGEN. Residue Glu384 participates in Mg(2+) binding.

Belongs to the acetokinase family. Homodimer. It depends on Mg(2+) as a cofactor. The cofactor is Mn(2+).

Its subcellular location is the cytoplasm. It catalyses the reaction acetate + ATP = acetyl phosphate + ADP. It participates in metabolic intermediate biosynthesis; acetyl-CoA biosynthesis; acetyl-CoA from acetate: step 1/2. Catalyzes the formation of acetyl phosphate from acetate and ATP. Can also catalyze the reverse reaction. In Thermoanaerobacterium thermosaccharolyticum (strain ATCC 7956 / DSM 571 / NCIMB 9385 / NCA 3814 / NCTC 13789 / WDCM 00135 / 2032) (Clostridium thermosaccharolyticum), this protein is Acetate kinase.